Here is a 415-residue protein sequence, read N- to C-terminus: Diaminopimelate decarboxylase (415 aa).

At Lys54 the chain carries N6-(pyridoxal phosphate)lysine. Pyridoxal 5'-phosphate-binding positions include Gly223 and 264 to 267 (EPGR). The substrate site is built by Arg267, Arg303, and Tyr307. The active-site Proton donor is the Cys338. Glu339 and Tyr374 together coordinate substrate. Tyr374 contributes to the pyridoxal 5'-phosphate binding site.

This sequence belongs to the Orn/Lys/Arg decarboxylase class-II family. LysA subfamily. Homodimer. Pyridoxal 5'-phosphate is required as a cofactor.

The catalysed reaction is meso-2,6-diaminopimelate + H(+) = L-lysine + CO2. It participates in amino-acid biosynthesis; L-lysine biosynthesis via DAP pathway; L-lysine from DL-2,6-diaminopimelate: step 1/1. Specifically catalyzes the decarboxylation of meso-diaminopimelate (meso-DAP) to L-lysine. The polypeptide is Diaminopimelate decarboxylase (Buchnera aphidicola subsp. Acyrthosiphon pisum (strain APS) (Acyrthosiphon pisum symbiotic bacterium)).